The following is a 296-amino-acid chain: uncharacterized protein (296 aa).

A run of 2 helical transmembrane segments spans residues 82–102 (VVAPLPVVIHAGAMSILWSVQ) and 117–137 (ISVLALVLLGSLGIGVLSAIF).

Its subcellular location is the cell membrane. This is an uncharacterized protein from Sinorhizobium fredii (strain NBRC 101917 / NGR234).